We begin with the raw amino-acid sequence, 562 residues long: Formate--tetrahydrofolate ligase (562 aa).

71–78 is a binding site for ATP; the sequence is TPAGEGKS.

It belongs to the formate--tetrahydrofolate ligase family.

The enzyme catalyses (6S)-5,6,7,8-tetrahydrofolate + formate + ATP = (6R)-10-formyltetrahydrofolate + ADP + phosphate. It functions in the pathway one-carbon metabolism; tetrahydrofolate interconversion. This is Formate--tetrahydrofolate ligase from Bacillus cereus (strain ATCC 10987 / NRS 248).